The chain runs to 489 residues: UDP-N-acetylmuramoyl-L-alanyl-D-glutamate--2,6-diaminopimelate ligase (489 aa).

Ser-30 contacts UDP-N-acetyl-alpha-D-muramoyl-L-alanyl-D-glutamate. 108-114 (GTNGKTT) lines the ATP pocket. Residues Asn-149, 150-151 (TT), Ser-177, Gln-183, and Arg-185 each bind UDP-N-acetyl-alpha-D-muramoyl-L-alanyl-D-glutamate. Lys-217 bears the N6-carboxylysine mark. Meso-2,6-diaminopimelate-binding positions include Arg-383, 407 to 410 (DNPR), Gly-459, and Glu-463. The short motif at 407-410 (DNPR) is the Meso-diaminopimelate recognition motif element.

Belongs to the MurCDEF family. MurE subfamily. The cofactor is Mg(2+). Post-translationally, carboxylation is probably crucial for Mg(2+) binding and, consequently, for the gamma-phosphate positioning of ATP.

Its subcellular location is the cytoplasm. It carries out the reaction UDP-N-acetyl-alpha-D-muramoyl-L-alanyl-D-glutamate + meso-2,6-diaminopimelate + ATP = UDP-N-acetyl-alpha-D-muramoyl-L-alanyl-gamma-D-glutamyl-meso-2,6-diaminopimelate + ADP + phosphate + H(+). It participates in cell wall biogenesis; peptidoglycan biosynthesis. In terms of biological role, catalyzes the addition of meso-diaminopimelic acid to the nucleotide precursor UDP-N-acetylmuramoyl-L-alanyl-D-glutamate (UMAG) in the biosynthesis of bacterial cell-wall peptidoglycan. The sequence is that of UDP-N-acetylmuramoyl-L-alanyl-D-glutamate--2,6-diaminopimelate ligase from Geobacillus thermodenitrificans (strain NG80-2).